The sequence spans 190 residues: Selenoprotein S (190 aa).

Residues 28–48 form a helical membrane-spanning segment; the sequence is SLLASYGWYILFSCILLYIVI. A VCP/p97-interacting motif (VIM) region spans residues 78–90; it reads RQEALAAARLRMQ. Residues 115–190 form a disordered region; sequence KIEMWDSMQE…RRGPSSGGUN (76 aa). The segment covering 160 to 174 has biased composition (gly residues); the sequence is RGGGYNPLTGEGGGT. A non-standard amino acid (selenocysteine) is located at residue Sec-189.

Belongs to the selenoprotein S family. Interacts with DERL1 and (via VIM motif) with VCP, suggesting that it forms a membrane complex with DERL1 that serves as a receptor for VCP. Also interacts with DERL2, DERL3 and SELENOK. The SELENOK-SELENOS complex interacts with VCP. Interacts with CCDC47. Truncated SELENOS proteins produced by failed UGA/Sec decoding are ubiquitinated by the CRL2(KLHDC2) and CRL2(KLHDC3) complexes, which recognizes the glycine (Gly) at the C-terminus of truncated SELENOS proteins. Truncated SELENOS proteins produced by failed UGA/Sec decoding are also ubiquitinated by the CRL5(KLHDC1) complex.

Its subcellular location is the endoplasmic reticulum membrane. It is found in the cytoplasm. Its function is as follows. Involved in the degradation process of misfolded endoplasmic reticulum (ER) luminal proteins. Participates in the transfer of misfolded proteins from the ER to the cytosol, where they are destroyed by the proteasome in a ubiquitin-dependent manner. Probably acts by serving as a linker between DERL1, which mediates the retrotranslocation of misfolded proteins into the cytosol, and the ATPase complex VCP, which mediates the translocation and ubiquitination. In Mus musculus (Mouse), this protein is Selenoprotein S.